We begin with the raw amino-acid sequence, 490 residues long: Katanin p60 ATPase-containing subunit A-like 1 (490 aa).

The residue at position 1 (methionine 1) is an N-acetylmethionine. A disordered region spans residues 96-182 (PAVWPPPVPA…ASDGEIPKFD (87 aa)). The segment covering 116-127 (PNREVRPLRKEM) has biased composition (basic and acidic residues). Residues 128 to 139 (AGVGARGPVGRA) are compositionally biased toward low complexity. Residues 143–169 (SKSEKPSASRDKDCRARGRDDKGRKNM) show a composition bias toward basic and acidic residues. Serine 174 is subject to Phosphoserine. 248-255 (GPPGTGKT) is an ATP binding site.

This sequence belongs to the AAA ATPase family. Katanin p60 subunit A1 subfamily. A-like 1 sub-subfamily. As to quaternary structure, interacts with KATNB1 and KATNBL1.

Its subcellular location is the cytoplasm. It is found in the cytoskeleton. The protein resides in the spindle pole. The protein localises to the spindle. The enzyme catalyses n ATP + n H2O + a microtubule = n ADP + n phosphate + (n+1) alpha/beta tubulin heterodimers.. Its function is as follows. Regulates microtubule dynamics in Sertoli cells, a process that is essential for spermiogenesis and male fertility. Severs microtubules in an ATP-dependent manner, promoting rapid reorganization of cellular microtubule arrays. Has microtubule-severing activity in vitro. In Oryctolagus cuniculus (Rabbit), this protein is Katanin p60 ATPase-containing subunit A-like 1.